A 313-amino-acid polypeptide reads, in one-letter code: Olfactory receptor 8B2 (313 aa).

The Extracellular segment spans residues 1 to 25 (MLARNNSLVTEFILAGLTDHPEFRQ). Residue asparagine 5 is glycosylated (N-linked (GlcNAc...) asparagine). Residues 26-46 (PLFFLFLVIYIVTMVGNLGLI) traverse the membrane as a helical segment. Residues 47 to 54 (TLFGLNSH) lie on the Cytoplasmic side of the membrane. Residues 55-75 (LHTPMYYFLFNLSFIDLCYSS) form a helical membrane-spanning segment. Residues 76-99 (VFTPKMLMNFVSKKNIISNVGCMT) are Extracellular-facing. Cysteines 97 and 189 form a disulfide. The chain crosses the membrane as a helical span at residues 100–120 (RLFFFLFFVISECYMLTSMAY). At 121 to 139 (DRYVAICNPLLYKVTMSHQ) the chain is on the cytoplasmic side. A helical transmembrane segment spans residues 140–160 (VCSMLTFAAYIMGLAGATAHT). The Extracellular segment spans residues 161–197 (GCMLRLTFCSANIINHYLCDILPLLQLSCTSTYVNEV). The helical transmembrane segment at 198–217 (VVLIVVGTNITVPSCTILIS) threads the bilayer. Residues 218–237 (YVFIVTSILHIKSTQGRSKA) lie on the Cytoplasmic side of the membrane. Residues 238 to 258 (FSTCSSHVIALSLFFGSAAFM) traverse the membrane as a helical segment. Residues 259-270 (YIKYSSGSMEQG) lie on the Extracellular side of the membrane. A helical transmembrane segment spans residues 271 to 291 (KVSSVFYTNVVPMLNPLIYSL). Residues 292 to 313 (RNKDVKVALRKALIKIQRRNIF) are Cytoplasmic-facing.

The protein belongs to the G-protein coupled receptor 1 family.

The protein resides in the cell membrane. Its function is as follows. Odorant receptor. In Homo sapiens (Human), this protein is Olfactory receptor 8B2 (OR8B2).